The primary structure comprises 257 residues: Ethanolamine ammonia-lyase small subunit (257 aa).

The adenosylcob(III)alamin site is built by Val153, Glu174, and Cys203.

Belongs to the EutC family. In terms of assembly, the basic unit is a heterodimer which dimerizes to form tetramers. The heterotetramers trimerize; 6 large subunits form a core ring with 6 small subunits projecting outwards. The cofactor is adenosylcob(III)alamin.

It localises to the bacterial microcompartment. It carries out the reaction ethanolamine = acetaldehyde + NH4(+). It functions in the pathway amine and polyamine degradation; ethanolamine degradation. Functionally, catalyzes the deamination of various vicinal amino-alcohols to oxo compounds. Allows this organism to utilize ethanolamine as the sole source of nitrogen and carbon in the presence of external vitamin B12. The protein is Ethanolamine ammonia-lyase small subunit of Rhodococcus erythropolis (Arthrobacter picolinophilus).